Here is a 339-residue protein sequence, read N- to C-terminus: Probable scoulerine-9-O-methyltransferase OMT3B (339 aa).

Met-161 provides a ligand contact to S-adenosyl-L-methionine. Asp-164 is a binding site for substrate. Residues Thr-165, Gly-191, Asp-214, 228 to 229 (DV), and Lys-242 each bind S-adenosyl-L-methionine. 243 to 247 (SILHE) is a substrate binding site. The active-site Proton acceptor is His-246.

This sequence belongs to the class I-like SAM-binding methyltransferase superfamily. Cation-independent O-methyltransferase family. COMT subfamily.

It catalyses the reaction (S)-scoulerine + S-adenosyl-L-methionine = (S)-tetrahydrocolumbamine + S-adenosyl-L-homocysteine + H(+). It participates in alkaloid biosynthesis. Functionally, methyltransferase involved in the biosynthesis of the benzylisoquinoline alkaloid noscapine. Catalyzes the conversion of (S)-scoulerine to (S)-tetrahydrocolumbamine. In Papaver somniferum (Opium poppy), this protein is Probable scoulerine-9-O-methyltransferase OMT3B.